We begin with the raw amino-acid sequence, 275 residues long: Photosystem II extrinsic protein O (275 aa).

Residues 1–28 (MRFRTLLIAFLALCLGLITACSEGPANA) form the signal peptide.

This sequence belongs to the PsbO family. As to quaternary structure, PSII is composed of 1 copy each of membrane proteins PsbA, PsbB, PsbC, PsbD, PsbE, PsbF, PsbH, PsbI, PsbJ, PsbK, PsbL, PsbM, PsbT, PsbX, PsbY, PsbZ, Psb30/Ycf12, peripheral proteins PsbO, CyanoQ (PsbQ), PsbU, PsbV and a large number of cofactors. It forms dimeric complexes.

The protein resides in the cellular thylakoid membrane. In terms of biological role, one of the extrinsic, lumenal subunits of photosystem II (PSII), which stabilize and protect the oxygen-evolving complex. PSII is a light-driven water plastoquinone oxidoreductase, using light energy to abstract electrons from H(2)O, generating a proton gradient subsequently used for ATP formation. Required for dimerization of PSII and for binding of PsbQ to PSII. The sequence is that of Photosystem II extrinsic protein O from Crocosphaera subtropica (strain ATCC 51142 / BH68) (Cyanothece sp. (strain ATCC 51142)).